The sequence spans 498 residues: Lysine--tRNA ligase (498 aa).

Mg(2+) contacts are provided by E409 and E416.

It belongs to the class-II aminoacyl-tRNA synthetase family. Homodimer. It depends on Mg(2+) as a cofactor.

It is found in the cytoplasm. It carries out the reaction tRNA(Lys) + L-lysine + ATP = L-lysyl-tRNA(Lys) + AMP + diphosphate. The protein is Lysine--tRNA ligase of Teredinibacter turnerae (strain ATCC 39867 / T7901).